Consider the following 226-residue polypeptide: Probable endolytic peptidoglycan transglycosylase RlpA (226 aa).

Positions 1-26 (MERFLGFRTPLGALGVVILLTLILSS) are cleaved as a signal peptide. Residue C27 is the site of N-palmitoyl cysteine attachment. Residue C27 is the site of S-diacylglycerol cysteine attachment.

This sequence belongs to the RlpA family.

The protein localises to the cell membrane. In terms of biological role, lytic transglycosylase with a strong preference for naked glycan strands that lack stem peptides. The polypeptide is Probable endolytic peptidoglycan transglycosylase RlpA (Aquifex aeolicus (strain VF5)).